The primary structure comprises 130 residues: UPF0102 protein RPE_0358 (130 aa).

Belongs to the UPF0102 family.

The protein is UPF0102 protein RPE_0358 of Rhodopseudomonas palustris (strain BisA53).